The primary structure comprises 515 residues: Ribosome assembly protein 4 (515 aa).

Residues 20-128 (REVAIIPKDL…LLYTPRAVFK (109 aa)) form an interaction with MDN1 region. The interval 29–125 (LPNVSIKFQA…QITLLYTPRA (97 aa)) is ubiquitin-like (UBL) domain. 8 WD repeats span residues 141–181 (GHGS…PMHT), 184–223 (GHYN…CLGD), 227–273 (GHSK…CQYT), 276–314 (GHTN…RCIN), 352–396 (AQKK…KPIA), 400–439 (GHQK…FIST), 442–481 (GHVA…LSVD), and 484–515 (GHKD…LWTH).

The protein belongs to the NLE1/RSA4 family. In terms of assembly, associates with the pre-60S ribosomal particle. Interacts (via WD repeats) with uL18 (RPL5). Interacts (via UBL domain) with MDN1 (via VWFA/MIDAS domain). Interacts (via WD repeats) with NSA2.

Its subcellular location is the nucleus. The protein resides in the nucleolus. Its function is as follows. Involved in ribosome biogenesis. Required for processing and efficient intra-nuclear transport of pre-60S ribosomal subunits. Interacts with the AAA-ATPase Midasin (MDN1/REA1), which is essential for the ATP-dependent dissociation of a group of nonribosomal factors from the pre-60S particle. This is Ribosome assembly protein 4 from Saccharomyces cerevisiae (strain ATCC 204508 / S288c) (Baker's yeast).